The primary structure comprises 149 residues: Transcriptional regulator MraZ (149 aa).

SpoVT-AbrB domains lie at 5–52 (ITTL…PLPE) and 81–124 (AEEC…DSMV).

Belongs to the MraZ family. In terms of assembly, forms oligomers.

It localises to the cytoplasm. The protein resides in the nucleoid. This Nitrosococcus oceani (strain ATCC 19707 / BCRC 17464 / JCM 30415 / NCIMB 11848 / C-107) protein is Transcriptional regulator MraZ.